The following is a 206-amino-acid chain: 21.9 kDa heat shock protein (206 aa).

An N-terminal signal peptide occupies residues 1 to 29 (MAAVAEREVLGMVAAVAAMVVMMAPPAAA). Residues 65–187 (EPAAVALARC…GREPRVVAID (123 aa)) enclose the sHSP domain. A Cell attachment site motif is present at residues 94–96 (RGD).

Belongs to the small heat shock protein (HSP20) family. May form oligomeric structures.

The protein resides in the endoplasmic reticulum. The protein is 21.9 kDa heat shock protein (HSP21.9) of Oryza sativa subsp. japonica (Rice).